Here is a 425-residue protein sequence, read N- to C-terminus: Kynureninase (425 aa).

Pyridoxal 5'-phosphate is bound by residues leucine 105, threonine 106, 133–136 (FPSD), aspartate 218, histidine 221, and tyrosine 243. An N6-(pyridoxal phosphate)lysine modification is found at lysine 244. Tryptophan 274 and asparagine 302 together coordinate pyridoxal 5'-phosphate.

Belongs to the kynureninase family. Homodimer. Pyridoxal 5'-phosphate serves as cofactor.

The catalysed reaction is L-kynurenine + H2O = anthranilate + L-alanine + H(+). It carries out the reaction 3-hydroxy-L-kynurenine + H2O = 3-hydroxyanthranilate + L-alanine + H(+). The protein operates within amino-acid degradation; L-kynurenine degradation; L-alanine and anthranilate from L-kynurenine: step 1/1. It participates in cofactor biosynthesis; NAD(+) biosynthesis; quinolinate from L-kynurenine: step 2/3. In terms of biological role, catalyzes the cleavage of L-kynurenine (L-Kyn) and L-3-hydroxykynurenine (L-3OHKyn) into anthranilic acid (AA) and 3-hydroxyanthranilic acid (3-OHAA), respectively. The chain is Kynureninase from Flavobacterium psychrophilum (strain ATCC 49511 / DSM 21280 / CIP 103535 / JIP02/86).